Reading from the N-terminus, the 206-residue chain is 2-oxoglutarate-dependent dioxygenase iboH (206 aa).

Residues 51 to 157 (PSTTTLVLLH…RYSIAYFLRP (107 aa)) enclose the Fe2OG dioxygenase domain. Fe cation-binding residues include H75, D77, and H134. Position 148 (R148) interacts with 2-oxoglutarate.

It belongs to the iron/ascorbate-dependent oxidoreductase family. Fe(2+) is required as a cofactor.

It carries out the reaction L-glutamate + 2-oxoglutarate + O2 = (3R)-3-hydroxy-L-glutamate + succinate + CO2. The protein operates within secondary metabolite biosynthesis. In terms of biological role, 2-oxoglutarate-dependent dioxygenase; part of the gene cluster that mediates the biosynthesis of the psychoactive metabolites ibotenic acid and muscimol. The first committed step is glutamate hydroxylation by the 2-oxoglutarate-dependent dioxygenase iboH, and the last step is decarboxylation of ibotenic acid to muscimol by the decarboxylase iboD. The order of the intermediate reactions is somewhat ambiguous. IboA likely activates the carboxylic acid at position 5 to introduce an amide bond, and the flavin monooxygenase iboF generates the N-O bond. There are several options for the latter step. One option is that iboF directly hydroxylates the amide nitrogen formed by iboA to produce a hydroxamic acid species. Another option is that iboF hydroxylates an external N-containing compound, whose resulting N-O bond is subsequently introduced into the hydroxyglutamate scaffold. The paralogous PLP-dependent cystathionine gamma-synthase-like enzymes iboG1 and iboG2 are likely involved in substitution of the OH group at position 3 by the O-N moiety. The first cyclic intermediate is most probably tricholomic acid which is likely desaturated to ibotenic acid by the cytochrome P450 monooxygenase iboC. In Amanita muscaria (strain Koide BX008), this protein is 2-oxoglutarate-dependent dioxygenase iboH.